Reading from the N-terminus, the 342-residue chain is Fructose-1,6-bisphosphatase class 1 (342 aa).

Mg(2+) is bound by residues Glu-97, Asp-119, Leu-121, and Asp-122. Residues 122–125 (DGSS), Asn-215, Tyr-247, and Lys-280 each bind substrate. Residue Glu-286 coordinates Mg(2+).

This sequence belongs to the FBPase class 1 family. Homotetramer. Requires Mg(2+) as cofactor.

It localises to the cytoplasm. The catalysed reaction is beta-D-fructose 1,6-bisphosphate + H2O = beta-D-fructose 6-phosphate + phosphate. The protein operates within carbohydrate biosynthesis; gluconeogenesis. The chain is Fructose-1,6-bisphosphatase class 1 from Leptospira interrogans serogroup Icterohaemorrhagiae serovar copenhageni (strain Fiocruz L1-130).